The following is a 642-amino-acid chain: Palmitoyltransferase akr1 (642 aa).

6 ANK repeats span residues Met-1–Ala-29, Gly-33–Ala-62, Leu-67–Leu-96, Gln-100–Leu-129, Gln-133–Ala-162, and Asp-166–Ala-196. Topologically, residues Met-1 to Phe-256 are cytoplasmic. 2 consecutive transmembrane segments (helical) span residues Ile-257 to Ile-277 and Cys-278 to Ile-298. At Thr-299–Pro-316 the chain is on the cytoplasmic side. A helical transmembrane segment spans residues Phe-317–Ile-337. Topologically, residues Val-338–Pro-343 are lumenal. A helical membrane pass occupies residues Ile-344–Val-364. The Cytoplasmic segment spans residues Arg-365–Thr-444. The DHHC domain occupies His-400 to Phe-450. Residue Cys-430 is the S-palmitoyl cysteine intermediate of the active site. A helical transmembrane segment spans residues Phe-445–Tyr-465. Over Tyr-466–Met-496 the chain is Lumenal. Residues Phe-497–Phe-517 traverse the membrane as a helical segment. Over Thr-518–Val-642 the chain is Cytoplasmic.

It belongs to the DHHC palmitoyltransferase family. AKR/ZDHHC17 subfamily.

It is found in the early endosome membrane. The protein resides in the golgi apparatus membrane. The enzyme catalyses L-cysteinyl-[protein] + hexadecanoyl-CoA = S-hexadecanoyl-L-cysteinyl-[protein] + CoA. Functionally, palmitoyltransferase specific for casein kinase 1. This chain is Palmitoyltransferase akr1 (akr1), found in Schizosaccharomyces pombe (strain 972 / ATCC 24843) (Fission yeast).